We begin with the raw amino-acid sequence, 196 residues long: Probable malonic semialdehyde reductase RutE (196 aa).

This sequence belongs to the nitroreductase family. HadB/RutE subfamily. Requires FMN as cofactor.

It carries out the reaction 3-hydroxypropanoate + NADP(+) = 3-oxopropanoate + NADPH + H(+). May reduce toxic product malonic semialdehyde to 3-hydroxypropionic acid, which is excreted. This chain is Probable malonic semialdehyde reductase RutE, found in Klebsiella pneumoniae (strain 342).